The primary structure comprises 130 residues: Small ribosomal subunit protein uS9 (130 aa).

The protein belongs to the universal ribosomal protein uS9 family.

The sequence is that of Small ribosomal subunit protein uS9 from Shewanella baltica (strain OS155 / ATCC BAA-1091).